The chain runs to 230 residues: Acyl-coenzyme A thioesterase THEM4 (230 aa).

A mitochondrion-targeting transit peptide spans 1–27 (MLRSCAMRLRTLGATPARRPEATRRLF). Phosphoserine occurs at positions 28 and 29. 2 positions are modified to N6-succinyllysine: lysine 46 and lysine 57. An N6-acetyllysine modification is found at lysine 65. N6-succinyllysine is present on residues lysine 89 and lysine 98. Aspartate 152 (proton donor/acceptor) is an active-site residue. Substrate is bound by residues lysine 175 and 196-197 (RK). Lysine 197 is subject to N6-succinyllysine.

The protein belongs to the THEM4/THEM5 thioesterase family. Homodimer and homotetramer. Interacts with AKT1 in the cytosol. Phosphorylated.

Its subcellular location is the cell membrane. The protein resides in the cell projection. It localises to the ruffle membrane. It is found in the cytoplasm. The protein localises to the mitochondrion. Its subcellular location is the mitochondrion inner membrane. The protein resides in the mitochondrion intermembrane space. The enzyme catalyses hexadecanoyl-CoA + H2O = hexadecanoate + CoA + H(+). It catalyses the reaction octanoyl-CoA + H2O = octanoate + CoA + H(+). It carries out the reaction decanoyl-CoA + H2O = decanoate + CoA + H(+). The catalysed reaction is dodecanoyl-CoA + H2O = dodecanoate + CoA + H(+). The enzyme catalyses tetradecanoyl-CoA + H2O = tetradecanoate + CoA + H(+). It catalyses the reaction (9Z)-octadecenoyl-CoA + H2O = (9Z)-octadecenoate + CoA + H(+). It carries out the reaction (5Z,8Z,11Z,14Z)-eicosatetraenoyl-CoA + H2O = (5Z,8Z,11Z,14Z)-eicosatetraenoate + CoA + H(+). Functionally, has acyl-CoA thioesterase activity towards medium and long-chain (C14 to C18) fatty acyl-CoA substrates, and probably plays a role in mitochondrial fatty acid metabolism. Plays a role in the apoptotic process, possibly via its regulation of AKT1 activity. The polypeptide is Acyl-coenzyme A thioesterase THEM4 (Them4) (Rattus norvegicus (Rat)).